The chain runs to 463 residues: MMPDMIKDPFARLGLDREVLTVSQLNGRARVLLEDVFSSIWVEGEISNLSRPASGHVYFTLKDSGAQVRCALFRQSAARVRQALKDGLQVKVRGKVSLFEGRGDYQLILDTVEPAGDGALRLAFDALKAKLSDEGLFSAERKVALPLHPQRIGIISSPTGAVIRDIISVFRRRAPRVELTLIPTAVQGREAINQIVRALKLADSRGFDALILARGGGSLEDLWCFNEEAVARAIDACVTPIVSAVGHETDVSISDFVADVRAPTPSAAAELLAPDSSDLHRRVDNLHRRLVSRMQDRLMRERLRLEGISRRLRHPGERLRQQSQRLDDLDMRLRRALEQTMHQRQLRLAHMQSRLAAQHPGRTLAFLRQRLDALAERLPRAIREQIKARKLQLQSQVQTLNVVSPLATLGRGYSILLDERGHAIRNAAQTQTGQRLTARLGEGELHVRVEDNHLTPVTLSLLD.

This sequence belongs to the XseA family. In terms of assembly, heterooligomer composed of large and small subunits.

It is found in the cytoplasm. The catalysed reaction is Exonucleolytic cleavage in either 5'- to 3'- or 3'- to 5'-direction to yield nucleoside 5'-phosphates.. In terms of biological role, bidirectionally degrades single-stranded DNA into large acid-insoluble oligonucleotides, which are then degraded further into small acid-soluble oligonucleotides. The chain is Exodeoxyribonuclease 7 large subunit from Pseudomonas syringae pv. syringae (strain B728a).